A 204-amino-acid polypeptide reads, in one-letter code: Colicin-A (204 aa).

The next 2 helical transmembrane spans lie at 139-161 (SWVL…LGAY) and 165-187 (LGVP…GALI).

The protein belongs to the channel forming colicin family.

Its subcellular location is the cell membrane. Functionally, this colicin is a channel-forming colicin. This class of transmembrane toxins depolarize the cytoplasmic membrane, leading to dissipation of cellular energy. In terms of biological role, colicins are polypeptide toxins produced by and active against E.coli and closely related bacteria. This Escherichia coli protein is Colicin-A (caa).